A 220-amino-acid polypeptide reads, in one-letter code: RPA-interacting protein B (220 aa).

Residues 1–45 (MEAERRHRALYKGTTPPWKETYRKRCVERLKSNRSKLLDKFRQVG) are interaction with importin beta. The segment at 49–165 (HGGVGGSFLV…QCGVYINTQS (117 aa)) is interaction with RPA1. Residues 138-213 (CPVCNRNYLT…ASLFMSCQEC (76 aa)) form an RIP-type zinc finger.

Interacts directly with the RPA1 subunit of RPA complex. Interacts with importin beta, but not with importin alpha. Forms a complex with the RPA complex and importin beta, which is dissociated by Ran-GTP.

It is found in the nucleus. Mediates the import of RPA complex into the nucleus, via its interaction with importin beta. In Xenopus laevis (African clawed frog), this protein is RPA-interacting protein B (rpain-b).